Reading from the N-terminus, the 234-residue chain is Fibroblast growth factor-binding protein 1 (234 aa).

An N-terminal signal peptide occupies residues 1 to 23; the sequence is MRTHGLTLLSLLLLAVPMLLVEA. The tract at residues 25–59 is disordered; that stretch reads KEGRNRRGSKASADESLALGKPGKEPRSQPTNYPI. 3 cysteine pairs are disulfide-bonded: cysteine 71/cysteine 88, cysteine 97/cysteine 130, and cysteine 106/cysteine 142. N-linked (GlcNAc...) asparagine glycosylation occurs at asparagine 155. The disordered stretch occupies residues 169–200; that stretch reads MEPSPMDTVEVTTSSSPEKTQTMATKDPQCEE. O-linked (GalNAc...) serine glycosylation occurs at serine 172. A compositionally biased stretch (polar residues) spans 178-192; sequence EVTTSSSPEKTQTMA. Positions 194–234 are sufficient for interaction with FGF2 and FGF2-induced effects; sequence KDPQCEEEDLKNQRKAALEYCGETWGSLCNFFLSMVQGSSC. 2 cysteine pairs are disulfide-bonded: cysteine 198–cysteine 234 and cysteine 214–cysteine 222.

Belongs to the fibroblast growth factor-binding protein family. In terms of assembly, found in a complex with FGFBP1, FGF1 and FGF2. Interacts with FGF1, FGF7, FGF10, FGF22 and HSPG2. Interacts with FGF2.

The protein localises to the secreted. The protein resides in the extracellular space. It localises to the cell membrane. Acts as a carrier protein that release fibroblast-binding factors (FGFs) from the extracellular matrix (EM) storage and thus enhance the mitogenic activity of FGFs. Enhances FGF2 signaling during tissue repair, angiogenesis and in tumor growth. In Bos taurus (Bovine), this protein is Fibroblast growth factor-binding protein 1 (FGFBP1).